Here is a 422-residue protein sequence, read N- to C-terminus: Calpain-2 catalytic subunit (422 aa).

Positions 1-66 (QKLIRIRNPW…YSRLEICNLT (66 aa)) constitute a Calpain catalytic domain. The active site involves Asn8. The Ca(2+) site is built by Glu14, Asp21, and Glu45. The interval 67–236 (PDTLTSDTYK…KKADYQAVDD (170 aa)) is domain III. The tract at residues 237–251 (EIEADLEEADVSEDD) is linker. The tract at residues 252–422 (IDDGFRRLFA…LISWLCFSVL (171 aa)) is domain IV. Ca(2+) is bound by residues Ala264, Asp267, Glu269, Glu274, Asp307, Asp309, Thr311, Lys313, Glu318, Asp337, Asp339, Ser341, Thr343, Glu348, Asp380, and Asn383. EF-hand domains follow at residues 294–327 (LSIE…TKIQ) and 324–359 (TKIQ…AGFK). One can recognise an EF-hand 3 domain in the interval 389-422 (VRLETLFKIFKQLDPDNTGMIQLDLISWLCFSVL).

Belongs to the peptidase C2 family. As to quaternary structure, forms a heterodimer with a small (regulatory) subunit (CAPNS1). Interacts with CPEB3; this leads to cleavage of CPEB3. The cofactor is Ca(2+). In terms of tissue distribution, ubiquitous.

It localises to the cytoplasm. The protein resides in the cell membrane. The enzyme catalyses Broad endopeptidase specificity.. Activated by 200-1000 micromolar concentrations of calcium and inhibited by calpastatin. In terms of biological role, calcium-regulated non-lysosomal thiol-protease which catalyzes limited proteolysis of substrates involved in cytoskeletal remodeling and signal transduction. Proteolytically cleaves MYOC at 'Arg-226'. Proteolytically cleaves CPEB3 following neuronal stimulation which abolishes CPEB3 translational repressor activity, leading to translation of CPEB3 target mRNAs. In Oryctolagus cuniculus (Rabbit), this protein is Calpain-2 catalytic subunit (CAPN2).